We begin with the raw amino-acid sequence, 872 residues long: Probable cation-transporting P-type ATPase (872 aa).

The Cytoplasmic portion of the chain corresponds to 1–41 (MNKWTGLSAAAVLESRAQHGANLIPTKKLTPFWLLFLEQFK). A helical membrane pass occupies residues 42 to 62 (SLVVILLLVATILSLVVAIIS). At 63-79 (GVNANWLFDHNLVIEWT) the chain is on the extracellular side. Residues 80–100 (QPFVILITVLANSLIGSIQEF) form a helical membrane-spanning segment. Over 101 to 237 (KAQKSAHTLK…TKLSPLQQKL (137 aa)) the chain is Cytoplasmic. The helical transmembrane segment at 238 to 257 (EKVGKWFSWFGLGLFVVVFL) threads the bilayer. At 258 to 275 (VQLGLLGFHNFSANWSIA) the chain is on the extracellular side. A helical transmembrane segment spans residues 276-293 (LIGAIALVVAIIPEGLVT). At 294-642 (FINVIFALSV…EQGRKTFLTC (349 aa)) the chain is on the cytoplasmic side. The active-site 4-aspartylphosphate intermediate is Asp-331. Residues Asp-587 and Asp-591 each contribute to the Mg(2+) site. The chain crosses the membrane as a helical span at residues 643 to 662 (KRVLFNLFLTSIAGTIVVLL). The Extracellular segment spans residues 663 to 685 (GLFVLGEVFREQLSKANHNFQVF). The chain crosses the membrane as a helical span at residues 686-706 (TPTQLLIINLFVHGFPAVALA). The Cytoplasmic portion of the chain corresponds to 707 to 724 (IQPVQEKLMLKPFSTKNL). Residues 725–747 (FYNRGGFDLIWQSLLLSFLTLLF) form a helical membrane-spanning segment. The Extracellular portion of the chain corresponds to 748–768 (YSLGMVYAINDPELGKSGDLI). Residues 769 to 788 (NRAGATCGFMVLGGSAALNS) traverse the membrane as a helical segment. Residues 789–801 (LNLMVDRPLVATN) lie on the Cytoplasmic side of the membrane. A helical membrane pass occupies residues 802-824 (PKHYGIVWLGALSSIFVFLLIIF). Topologically, residues 825–842 (INPLGLVFSTLKDLTAHP) are extracellular. Residues 843–863 (VLIGYSFGGVLLYMTINEVVK) form a helical membrane-spanning segment. At 864-872 (LIRLSYGSV) the chain is on the cytoplasmic side.

It belongs to the cation transport ATPase (P-type) (TC 3.A.3) family. Type II subfamily.

The protein localises to the cell membrane. It catalyses the reaction ATP + H2O = ADP + phosphate + H(+). Could mediate calcium influx. The sequence is that of Probable cation-transporting P-type ATPase (pacL) from Mycoplasma pneumoniae (strain ATCC 29342 / M129 / Subtype 1) (Mycoplasmoides pneumoniae).